We begin with the raw amino-acid sequence, 446 residues long: tRNA modification GTPase MnmE (446 aa).

R24, E81, and K120 together coordinate (6S)-5-formyl-5,6,7,8-tetrahydrofolate. The region spanning 216–368 (GLHAVLIGPP…LHIRLRALAL (153 aa)) is the TrmE-type G domain. A K(+)-binding site is contributed by N226. GTP contacts are provided by residues 226–231 (NAGKSS), 245–251 (TDVAGTT), and 270–273 (DTAG). Mg(2+) is bound at residue S230. Positions 245, 247, and 250 each coordinate K(+). T251 is a Mg(2+) binding site. Residue K446 participates in (6S)-5-formyl-5,6,7,8-tetrahydrofolate binding.

This sequence belongs to the TRAFAC class TrmE-Era-EngA-EngB-Septin-like GTPase superfamily. TrmE GTPase family. Homodimer. Heterotetramer of two MnmE and two MnmG subunits. K(+) serves as cofactor.

It localises to the cytoplasm. Functionally, exhibits a very high intrinsic GTPase hydrolysis rate. Involved in the addition of a carboxymethylaminomethyl (cmnm) group at the wobble position (U34) of certain tRNAs, forming tRNA-cmnm(5)s(2)U34. This is tRNA modification GTPase MnmE from Xanthomonas euvesicatoria pv. vesicatoria (strain 85-10) (Xanthomonas campestris pv. vesicatoria).